The primary structure comprises 438 residues: Histidine--tRNA ligase (438 aa).

Belongs to the class-II aminoacyl-tRNA synthetase family. In terms of assembly, homodimer.

The protein resides in the cytoplasm. The catalysed reaction is tRNA(His) + L-histidine + ATP = L-histidyl-tRNA(His) + AMP + diphosphate + H(+). This is Histidine--tRNA ligase from Blochmanniella pennsylvanica (strain BPEN).